The following is a 537-amino-acid chain: CTP synthase (537 aa).

The amidoligase domain stretch occupies residues 1–268 (MSTKYIFVTG…DQIVCDHLKL (268 aa)). Residue serine 14 participates in CTP binding. Serine 14 contacts UTP. 15–20 (SIGKGI) serves as a coordination point for ATP. Tyrosine 55 provides a ligand contact to L-glutamine. ATP is bound at residue aspartate 72. Mg(2+) is bound by residues aspartate 72 and glutamate 142. Residues 149–151 (DIE), 189–194 (KTKPTQ), and lysine 225 contribute to the CTP site. Residues 189 to 194 (KTKPTQ) and lysine 225 each bind UTP. Residues 293–536 (RIALVGKYVE…VTAAVEKSSD (244 aa)) form the Glutamine amidotransferase type-1 domain. Residue glycine 355 participates in L-glutamine binding. Cysteine 382 acts as the Nucleophile; for glutamine hydrolysis in catalysis. Residues 383–386 (LGMQ), glutamate 406, and arginine 464 each bind L-glutamine. Catalysis depends on residues histidine 509 and glutamate 511.

It belongs to the CTP synthase family. Homotetramer.

It carries out the reaction UTP + L-glutamine + ATP + H2O = CTP + L-glutamate + ADP + phosphate + 2 H(+). The enzyme catalyses L-glutamine + H2O = L-glutamate + NH4(+). The catalysed reaction is UTP + NH4(+) + ATP = CTP + ADP + phosphate + 2 H(+). It functions in the pathway pyrimidine metabolism; CTP biosynthesis via de novo pathway; CTP from UDP: step 2/2. With respect to regulation, allosterically activated by GTP, when glutamine is the substrate; GTP has no effect on the reaction when ammonia is the substrate. The allosteric effector GTP functions by stabilizing the protein conformation that binds the tetrahedral intermediate(s) formed during glutamine hydrolysis. Inhibited by the product CTP, via allosteric rather than competitive inhibition. Its function is as follows. Catalyzes the ATP-dependent amination of UTP to CTP with either L-glutamine or ammonia as the source of nitrogen. Regulates intracellular CTP levels through interactions with the four ribonucleotide triphosphates. In Streptococcus sanguinis (strain SK36), this protein is CTP synthase.